Consider the following 714-residue polypeptide: Sodium-dependent acetylcholine transporter (714 aa).

Residues 1 to 21 (MSVSSNDPEQRNGRGMASGNN) are disordered. Topologically, residues 1–74 (MSVSSNDPEQ…GNWSNKSDYL (74 aa)) are cytoplasmic. The next 3 membrane-spanning stretches (helical) occupy residues 75 to 95 (LAVIGFTAGVGSFWKFPFLVF), 100 to 120 (AAFLVPYLCMLCLASLPMFFM), and 152 to 172 (ISGFFAVFFNIISAWTLFYLI). The Extracellular portion of the chain corresponds to 173-257 (NSFSFSIPWS…LSKGVDDFGT (85 aa)). Asparagine 192, asparagine 205, asparagine 211, and asparagine 222 each carry an N-linked (GlcNAc...) asparagine glycan. The next 9 helical transmembrane spans lie at 258–278 (LNWYLGLCVLACWIAVFLCLF), 287–307 (VVYVAVIVPFIILTVLLTRLL), 336–356 (AAVQAFYSVSCCSGGLFTIAS), 368–388 (IWLVLIVDVIVSLVGCLLTFS), 422–442 (AGVSVAPLYAGLFFIMILLVV), 476–496 (VCALFILLSIPFCLSSGLFWM), 502–522 (FVLTWPLVVIAFLECMAINWV), 548–568 (ILFKFICPMVYLAILCFLWLD), and 584–604 (ILTAWCIASFPLILIPIVGIW). The Cytoplasmic segment spans residues 605 to 714 (QFCIAKGTIT…IPKFERETAI (110 aa)).

It belongs to the sodium:neurotransmitter symporter (SNF) (TC 2.A.22) family. In terms of assembly, interacts with stn-1; part of the DGC. In terms of tissue distribution, body wall, and vulval and enteric muscles.

Its subcellular location is the cell membrane. The protein localises to the postsynaptic cell membrane. In terms of biological role, mediates sodium-dependent uptake of acetylcholine at neuromuscular junctions during periods of increased synaptic activity, may also prevent spillover to adjacent synaptic sites. Not involved in the uptake of other neurotransmitters (GABA, glycine, proline and glutamate) and there was also no inhibition of uptake by adding an excess of other candidate substrates (GABA, glycine, taurine, creatine, proline, alanine, carnitine, glutamate and betaine). Required for muscle integrity; altered transport of acetylcholine due to loss of dystrophin-glycoprotein complex (DGC) function results in muscle degeneration. In Caenorhabditis elegans, this protein is Sodium-dependent acetylcholine transporter.